The primary structure comprises 609 residues: Proteasome-associated ATPase (609 aa).

Positions 1–25 (MADSERSEAFGTPDDTPLSSNDAAE) are disordered. A coiled-coil region spans residues 19–96 (SSNDAAELEQ…LREEVDRLGQ (78 aa)). ATP is bound at residue 296-301 (GCGKTL). The interval 608-609 (YL) is docks into pockets in the proteasome alpha-ring.

Belongs to the AAA ATPase family. In terms of assembly, homohexamer. Assembles into a hexameric ring structure that caps the 20S proteasome core. Strongly interacts with the prokaryotic ubiquitin-like protein Pup through a hydrophobic interface; the interacting region of ARC lies in its N-terminal coiled-coil domain. There is one Pup binding site per ARC hexamer ring. Upon ATP-binding, the C-terminus of ARC interacts with the alpha-rings of the proteasome core, possibly by binding to the intersubunit pockets.

Its pathway is protein degradation; proteasomal Pup-dependent pathway. Functionally, ATPase which is responsible for recognizing, binding, unfolding and translocation of pupylated proteins into the bacterial 20S proteasome core particle. May be essential for opening the gate of the 20S proteasome via an interaction with its C-terminus, thereby allowing substrate entry and access to the site of proteolysis. Thus, the C-termini of the proteasomal ATPase may function like a 'key in a lock' to induce gate opening and therefore regulate proteolysis. This Mycobacterium marinum (strain ATCC BAA-535 / M) protein is Proteasome-associated ATPase.